Here is a 155-residue protein sequence, read N- to C-terminus: Small ribosomal subunit protein uS7 (155 aa).

Belongs to the universal ribosomal protein uS7 family. In terms of assembly, part of the 30S ribosomal subunit. Contacts proteins S9 and S11.

One of the primary rRNA binding proteins, it binds directly to 16S rRNA where it nucleates assembly of the head domain of the 30S subunit. Is located at the subunit interface close to the decoding center, probably blocks exit of the E-site tRNA. The chain is Small ribosomal subunit protein uS7 from Corynebacterium efficiens (strain DSM 44549 / YS-314 / AJ 12310 / JCM 11189 / NBRC 100395).